Reading from the N-terminus, the 1308-residue chain is Cilia- and flagella-associated protein 57 C (1308 aa).

WD repeat units follow at residues N57–N99, Y110–G154, N415–S454, S504–Q546, G551–Q590, L645–T689, and H694–M733. A coiled-coil region spans residues L779 to I1000.

This sequence belongs to the CFAP57 family. In terms of assembly, forms a heterodimer with CFAP57A. Associates with components of the nexin-dynein regulatory complex (N-DRC) and the CFAP184:CFAP263 complex.

Its subcellular location is the cell projection. It is found in the cilium. Associates with components of the nexin-dynein regulatory complex (N-DRC), a key regulator of ciliary/flagellar motility, and might act as an inner dynein arm (IDA) hub or linkage. The polypeptide is Cilia- and flagella-associated protein 57 C (CFAP57C) (Tetrahymena thermophila (strain SB210)).